The chain runs to 230 residues: 5'-methylthioadenosine/S-adenosylhomocysteine nucleosidase (230 aa).

Glu-12 acts as the Proton acceptor in catalysis. Residues Gly-78, Ile-153, and 174-175 (ME) contribute to the substrate site. Residue Asp-198 is the Proton donor of the active site.

It belongs to the PNP/UDP phosphorylase family. MtnN subfamily.

The catalysed reaction is S-adenosyl-L-homocysteine + H2O = S-(5-deoxy-D-ribos-5-yl)-L-homocysteine + adenine. The enzyme catalyses S-methyl-5'-thioadenosine + H2O = 5-(methylsulfanyl)-D-ribose + adenine. It carries out the reaction 5'-deoxyadenosine + H2O = 5-deoxy-D-ribose + adenine. The protein operates within amino-acid biosynthesis; L-methionine biosynthesis via salvage pathway; S-methyl-5-thio-alpha-D-ribose 1-phosphate from S-methyl-5'-thioadenosine (hydrolase route): step 1/2. Functionally, catalyzes the irreversible cleavage of the glycosidic bond in both 5'-methylthioadenosine (MTA) and S-adenosylhomocysteine (SAH/AdoHcy) to adenine and the corresponding thioribose, 5'-methylthioribose and S-ribosylhomocysteine, respectively. Also cleaves 5'-deoxyadenosine, a toxic by-product of radical S-adenosylmethionine (SAM) enzymes, into 5-deoxyribose and adenine. This is 5'-methylthioadenosine/S-adenosylhomocysteine nucleosidase from Shewanella pealeana (strain ATCC 700345 / ANG-SQ1).